Reading from the N-terminus, the 89-residue chain is Large ribosomal subunit protein bL27 (89 aa).

Residues 1–21 (MAHKKAGGSSRNGRDSAGRRL) are disordered.

It belongs to the bacterial ribosomal protein bL27 family.

The chain is Large ribosomal subunit protein bL27 from Novosphingobium aromaticivorans (strain ATCC 700278 / DSM 12444 / CCUG 56034 / CIP 105152 / NBRC 16084 / F199).